We begin with the raw amino-acid sequence, 198 residues long: Recombination protein RecR (198 aa).

The C4-type zinc-finger motif lies at 57–72 (CSVCGHITDQDPCAIC). Residues 80–175 (SLICVVQDPK…RTTRIAHGLP (96 aa)) enclose the Toprim domain.

The protein belongs to the RecR family.

Functionally, may play a role in DNA repair. It seems to be involved in an RecBC-independent recombinational process of DNA repair. It may act with RecF and RecO. This is Recombination protein RecR from Oceanobacillus iheyensis (strain DSM 14371 / CIP 107618 / JCM 11309 / KCTC 3954 / HTE831).